We begin with the raw amino-acid sequence, 456 residues long: MSKQTQCVHIENCNINYESIDIQLYDNENITIPNCYKCSSQDNILICLECGIVVCMEDCKLHSNHSIFKIFHGDDKTLWCNDCNELIKESTMIEKCTKNSDLINKKLKDIENLFKVMKLFIYYDQRNLKYNKNFDSIDNSIKDIIKNSNIIKNEIKIENEIEIENNKIKEFIKLIKNDKCKNIIVLTGAGISVASGIPDFRSVETGLYNNENVSKFKLPFKEAVFDIDYFKFNPEPFYQLSKDLYPSGKFKCTPVHYFIKLLSDKGLLLRNYAQNADTLERIAGIPLDKLIEAHGSFAVSRCTNCGLEYSQEYIKDSIFNNDPLKSVVPRCKVVQCNNAVIKPDIVFFGESLPPIFNQNILDDINRCDCLIVIGTSLKVQPIASMVHFFPHFKNIPRLLINNQIVGENSFGGFNFNNNKNFDFKMIGDCQESVLNLSKLLNWDTELLNLINSKNHN.

The 283-residue stretch at 161-443 (IEIENNKIKE…LNLSKLLNWD (283 aa)) folds into the Deacetylase sirtuin-type domain. The active-site Proton acceptor is His294. 4 residues coordinate Zn(2+): Cys302, Cys305, Cys331, and Cys336.

It belongs to the sirtuin family. Zn(2+) serves as cofactor.

The enzyme catalyses N(6)-acetyl-L-lysyl-[protein] + NAD(+) + H2O = 2''-O-acetyl-ADP-D-ribose + nicotinamide + L-lysyl-[protein]. In terms of biological role, NAD-dependent deacetylase, which plays an important role in the regulation of transcriptional repression. The sequence is that of NAD-dependent deacetylase sir2C (sir2C) from Dictyostelium discoideum (Social amoeba).